Here is a 573-residue protein sequence, read N- to C-terminus: Sulfate adenylyltransferase (573 aa).

Residues 1-169 form an N-terminal region; it reads MSNPPHGGVL…LEAVNKLQHY (169 aa). Residues 170–394 are catalytic; the sequence is DFVDLRYSPA…LRESHPPRSQ (225 aa). Glutamine 197 is a binding site for sulfate. Residues 197-200 and 291-294 each bind ATP; these read QTRN and GRDH. Residues threonine 198, arginine 199, and asparagine 200 contribute to the active site. Position 199 (arginine 199) interacts with sulfate. Sulfate is bound at residue alanine 295. Methionine 333 provides a ligand contact to ATP. The tract at residues 395–573 is allosteric regulation domain; adenylyl-sulfate kinase-like; it reads QGFTVLFTGY…LESQGLLDRF (179 aa). 3'-phosphoadenylyl sulfate-binding positions include 434–437, arginine 451, 477–478, and arginine 515; these read ENIR and IA.

In the N-terminal section; belongs to the sulfate adenylyltransferase family. It in the C-terminal section; belongs to the APS kinase family. As to quaternary structure, homohexamer. Dimer of trimers.

The protein localises to the cytoplasm. It catalyses the reaction sulfate + ATP + H(+) = adenosine 5'-phosphosulfate + diphosphate. It functions in the pathway sulfur metabolism; hydrogen sulfide biosynthesis; sulfite from sulfate: step 1/3. With respect to regulation, allosterically inhibited by 3'-phosphoadenosine 5'-phosphosulfate (PAPS). Its function is as follows. Catalyzes the first intracellular reaction of sulfate assimilation, forming adenosine-5'-phosphosulfate (APS) from inorganic sulfate and ATP. Plays an important role in sulfate activation as a component of the biosynthesis pathway of sulfur-containing amino acids. In Neurospora crassa (strain ATCC 24698 / 74-OR23-1A / CBS 708.71 / DSM 1257 / FGSC 987), this protein is Sulfate adenylyltransferase (cys-11).